A 339-amino-acid chain; its full sequence is Phenylalanine--tRNA ligase alpha subunit (339 aa).

E253 is a binding site for Mg(2+).

This sequence belongs to the class-II aminoacyl-tRNA synthetase family. Phe-tRNA synthetase alpha subunit type 1 subfamily. Tetramer of two alpha and two beta subunits. The cofactor is Mg(2+).

Its subcellular location is the cytoplasm. The catalysed reaction is tRNA(Phe) + L-phenylalanine + ATP = L-phenylalanyl-tRNA(Phe) + AMP + diphosphate + H(+). This chain is Phenylalanine--tRNA ligase alpha subunit, found in Geobacter sulfurreducens (strain ATCC 51573 / DSM 12127 / PCA).